The following is a 325-amino-acid chain: Replication factor C small subunit (325 aa).

Position 47-54 (47-54 (GPPGTGKT)) interacts with ATP.

Belongs to the activator 1 small subunits family. RfcS subfamily. In terms of assembly, heteromultimer composed of small subunits (RfcS) and large subunits (RfcL).

Part of the RFC clamp loader complex which loads the PCNA sliding clamp onto DNA. The protein is Replication factor C small subunit of Aeropyrum pernix (strain ATCC 700893 / DSM 11879 / JCM 9820 / NBRC 100138 / K1).